The primary structure comprises 426 residues: Histone deacetylase 9 (426 aa).

Residues 6–318 (KISYFYDGDV…WTVETGILLD (313 aa)) form a histone deacetylase region. The active-site Proton donor/acceptor is His-137. Zn(2+) contacts are provided by Asp-172, His-174, and Asp-261. A disordered region spans residues 383–426 (PDFYIPDFDEDEQNPDVRADQRSRDKQIQRDDEYFDGDNDNDAS). The segment covering 397–414 (PDVRADQRSRDKQIQRDD) has biased composition (basic and acidic residues). A compositionally biased stretch (acidic residues) spans 415–426 (EYFDGDNDNDAS).

The protein belongs to the histone deacetylase family. HD type 1 subfamily. In terms of assembly, interacts with AHL22. Binds to farnesylated ASG2 in the cytosol. Requires Zn(2+) as cofactor.

It is found in the nucleus. It localises to the cytoplasm. Its subcellular location is the cytosol. The catalysed reaction is N(6)-acetyl-L-lysyl-[histone] + H2O = L-lysyl-[histone] + acetate. In terms of biological role, responsible for the deacetylation of lysine residues on the N-terminal part of the core histones (H2A, H2B, H3 and H4). Histone deacetylation gives a tag for epigenetic repression and plays an important role in transcriptional regulation, cell cycle progression and developmental events. Histone deacetylases act via the formation of large multiprotein complexes. In Arabidopsis thaliana (Mouse-ear cress), this protein is Histone deacetylase 9 (HDA9).